Here is a 372-residue protein sequence, read N- to C-terminus: Histidine protein methyltransferase 1 homolog (372 aa).

2 disordered regions span residues Ser-30–Leu-55 and Asn-68–His-103. The segment covering Gln-39–Ser-49 has biased composition (basic and acidic residues). Residues Ala-70 to Asn-87 show a composition bias toward polar residues. A phosphoserine mark is found at Ser-72 and Ser-77. The residue at position 154 (His-154) is a Tele-methylhistidine; by autocatalysis. S-adenosyl-L-methionine is bound by residues Ile-168–Thr-172, Gly-195, and Gln-216–Tyr-218. The Nuclear localization signal motif lies at Pro-247–Arg-253. S-adenosyl-L-methionine contacts are provided by residues Gly-268 to Trp-270 and Ser-293.

Belongs to the methyltransferase superfamily. METTL18 family. As to quaternary structure, interacts with GRWD1 and members of the heat shock protein 90 and 70 families; these proteins may possibly be methylation substrates for the enzyme. Post-translationally, monomethylated at His-154 through automethylation. Automethylation at His-154 positively regulates the methyltransferase activity toward RPL3. Probably methylated on other residues.

It localises to the cytoplasm. It is found in the cytosol. Its subcellular location is the nucleus. The protein resides in the nucleolus. The catalysed reaction is L-histidyl-[protein] + S-adenosyl-L-methionine = N(tele)-methyl-L-histidyl-[protein] + S-adenosyl-L-homocysteine + H(+). Protein-L-histidine N-tele-methyltransferase that specifically monomethylates RPL3, thereby regulating translation elongation. Histidine methylation of RPL3 regulates translation elongation by slowing ribosome traversal on tyrosine codons: slower elongation provides enough time for proper folding of synthesized proteins and prevents cellular aggregation of tyrosine-rich proteins. The sequence is that of Histidine protein methyltransferase 1 homolog from Homo sapiens (Human).